Reading from the N-terminus, the 1322-residue chain is BRCA2-interacting transcriptional repressor EMSY (1322 aa).

Residues methionine 1–proline 478 form an interaction with BRCA2 region. Positions cysteine 16–valine 100 constitute an ENT domain. An interaction with ZMYND11 region spans residues proline 104–proline 108. The segment covering serine 148 to serine 162 has biased composition (low complexity). 2 disordered regions span residues serine 148 to valine 178 and valine 192 to valine 215. Threonine 207 is subject to Phosphothreonine. Phosphoserine occurs at positions 209 and 213. O-linked (GlcNAc) serine glycosylation is found at serine 228 and serine 236. Serine 238 carries the post-translational modification Phosphoserine. The O-linked (GlcNAc) threonine glycan is linked to threonine 271. Residues glutamine 417–glutamine 437 show a composition bias toward low complexity. Residues glutamine 417–isoleucine 444 are disordered. O-linked (GlcNAc) threonine glycans are attached at residues threonine 501 and threonine 506. Residue serine 557 is glycosylated (O-linked (GlcNAc) serine). Polar residues predominate over residues valine 698 to glutamine 707. Positions valine 698 to valine 736 are disordered. Over residues threonine 717–glutamine 734 the composition is skewed to low complexity. Serine 818 and serine 821 each carry phosphoserine. Threonine 1120 carries an O-linked (GlcNAc) threonine glycan. The residue at position 1136 (serine 1136) is a Phosphoserine. Over residues glutamine 1205–threonine 1223 the composition is skewed to polar residues. Disordered stretches follow at residues glutamine 1205–valine 1231 and glutamine 1290–serine 1322. Residues leucine 1291–threonine 1310 are compositionally biased toward acidic residues. A compositionally biased stretch (polar residues) spans proline 1312 to serine 1322.

In terms of assembly, homodimer. Interacts with the transactivation domain of BRCA2. Interacts with CBX1 (via chromoshadow domain). Interacts with ZMYND11. Does not interact with CBX3 or CBX5. Component of a nuclear receptor-mediated transcription complex composed of at least ZNF335, CCAR2 and EMSY; the complex stimulates the transcription of nuclear receptor target genes such as SOX9 and HOXA1. Within the complex interacts with CCAR2 and ZNF335. Components of this complex may associate with components of a histone methylation complex to form a complex at least composed of ZNF335, HCFC1, CCAR2, EMSY, MKI67, RBBP5, ASH2L and WDR5. Within this complex, interacts with ASH2L and RBBP5. In terms of processing, O-glycosylated during cytokinesis at sites identical or close to phosphorylation sites, this interferes with the phosphorylation status.

It localises to the nucleus. Functionally, regulator which is able to repress transcription, possibly via its interaction with a multiprotein chromatin remodeling complex that modifies the chromatin. Its interaction with BRCA2 suggests that it may play a central role in the DNA repair function of BRCA2. Mediates ligand-dependent transcriptional activation by nuclear hormone receptors. The polypeptide is BRCA2-interacting transcriptional repressor EMSY (Homo sapiens (Human)).